The primary structure comprises 495 residues: Pre-glycoprotein polyprotein GP complex (495 aa).

Residue Gly-2 is the site of N-myristoyl glycine; by host attachment. Over 2–17 the chain is Extracellular; the sequence is GQFISFMQEIPIFLQE. A helical membrane pass occupies residues 18-33; that stretch reads ALNIALVAVSLICIVK. Residues 34–58 lie on the Cytoplasmic side of the membrane; it reads GLVNLYRCGLFQLMVFLVLAGRSCS. A Zn(2+)-binding site is contributed by Cys-57. Over 59–434 the chain is Extracellular; the sequence is EETFKIGMHT…QGRTPITLVD (376 aa). Intrachain disulfides connect Cys-92–Cys-236, Cys-281–Cys-294, Cys-303–Cys-312, and Cys-366–Cys-387. N-linked (GlcNAc...) asparagine; by host glycosylation is found at Asn-95 and Asn-188. 4 N-linked (GlcNAc...) asparagine; by host glycosylation sites follow: Asn-367, Asn-375, Asn-392, and Asn-397. Residues 435-455 traverse the membrane as a helical segment; sequence ICFWSTVFFTSTLFLHLIGFP. Over 456–495 the chain is Cytoplasmic; sequence THEHIRGEGCPLPHRLNSMGGCRCGKYLPLKKPTIWHRRH. Zn(2+)-binding residues include His-457, His-459, Cys-465, His-469, Cys-477, Cys-479, and His-495.

It belongs to the arenaviridae GPC protein family. Interacts with glycoprotein G2. Part of the GP complex (GP-C) together with glycoprotein G1 and glycoprotein G2. The GP-complex interacts with protein Z, which interacts with ribonucleocapsid; these interactions may induce virion budding. As to quaternary structure, homotrimer; disulfide-linked. In pre-fusion state, G1 homotrimers bind G2 homotrimers via ionic interactions. Part of the GP complex (GP-C) together with glycoprotein G2 and the stable signal peptide. The GP-complex interacts with protein Z, which interacts with ribonucleocapsid; these interactions may induce virion budding. In terms of assembly, homotrimer. Interacts with the stable signal peptide. In pre-fusion state, G2 homotrimers bind G1 homotrimers via ionic interactions. Part of the GP complex (GP-C) together with glycoprotein G1 and the stable signal peptide. Acidification in the endosome triggers rearrangements, which ultimately leads to a 6 helix bundle formed by the two heptad repeat domains (HR1 and HR2) in post-fusion state. The GP-complex interacts with protein Z, which interacts with ribonucleocapsid; these interactions may induce virion budding. In terms of processing, specific enzymatic cleavages in vivo yield mature proteins. GP-C polyprotein is cleaved in the endoplasmic reticulum by the host protease MBTPS1. Only cleaved glycoprotein is incorporated into virions. Post-translationally, the SSP remains stably associated with the GP complex following cleavage by signal peptidase and plays crucial roles in the trafficking of GP through the secretory pathway. Myristoylation is necessary for GP2-mediated fusion activity.

Its subcellular location is the virion membrane. The protein localises to the host endoplasmic reticulum membrane. It localises to the host Golgi apparatus membrane. The protein resides in the host cell membrane. In terms of biological role, functions as a cleaved signal peptide that is retained as the third component of the GP complex (GP-C). Helps to stabilize the spike complex in its native conformation. The SSP is required for efficient glycoprotein expression, post-translational maturation cleavage of G1 and G2, glycoprotein transport to the cell surface plasma membrane, formation of infectious virus particles, and acid pH-dependent glycoprotein-mediated cell fusion. Functionally, forms the virion spikes together with glycoprotein G2. The glycoprotein spike trimers are connected to the underlying matrix. Interacts with the host receptor leading to virus endocytosis. Forms the virion spikes together with glycoprotein G1. The glycoprotein spike trimers are connected to the underlying matrix. Class I viral fusion protein that directs fusion of viral and host endosomal membranes, leading to delivery of the nucleocapsid into the cytoplasm. Membrane fusion is mediated by irreversible conformational changes induced by acidification. The sequence is that of Pre-glycoprotein polyprotein GP complex from Tacaribe virus (strain Franze-Fernandez) (TCRV).